The sequence spans 1088 residues: Serine/threonine-protein kinase LATS2 (1088 aa).

Positions 24–49 are disordered; sequence EGLKQPSKSSVQGLPAGPNSDTSLDA. Serine 83 carries the phosphoserine; by AURKA modification. The UBA domain maps to 98 to 139; the sequence is EVNRQMLQELVNAGCDQEMAGRALKQTGSRSIEAALEYISKM. The interval 101–141 is interaction with ubiquitinated AMOTL2; that stretch reads RQMLQELVNAGCDQEMAGRALKQTGSRSIEAALEYISKMGY. Polar residues predominate over residues 271 to 280; it reads RSPSFQSKTP. Residues 271–323 form a disordered region; it reads RSPSFQSKTPPETGGYASLPTKGQGGPPGAGLAFPPPAAGLYVPHPHHKQAGP. Phosphothreonine is present on threonine 279. Serine 380 carries the phosphoserine modification. 2 disordered regions span residues 383 to 428 and 454 to 483; these read KPGL…SLPA and PQTA…AAEG. Positions 404-413 are enriched in polar residues; sequence SRTNSFNSHQ. The segment covering 466–478 has biased composition (pro residues); sequence VPAPAPAPAPAPA. Positions 515–518 match the PPxY motif motif; the sequence is PPPY. Residues 543 to 592 form a disordered region; that stretch reads SLRAGPNEPEGGDKSRKSAKGDKGGKDKKQIQTSPVPVRKNSRDEEKRES. Over residues 553–572 the composition is skewed to basic and acidic residues; it reads GGDKSRKSAKGDKGGKDKKQ. Serine 576 carries the post-translational modification Phosphoserine. Positions 583–592 are enriched in basic and acidic residues; the sequence is NSRDEEKRES. The 306-residue stretch at 668 to 973 folds into the Protein kinase domain; it reads FVKIKTLGIG…ADDLKAHPFF (306 aa). ATP is bound by residues 674-682 and lysine 697; that span reads LGIGAFGEV. Aspartate 791 serves as the catalytic Proton acceptor. The 79-residue stretch at 974-1052 folds into the AGC-kinase C-terminal domain; sequence SAIDFSSDIR…RRFFDDNGYP (79 aa). Residues 994–1022 form a disordered region; that stretch reads SHPMDTSNFDPVDEESPWNDASEGSTKAW. Threonine 1041 carries the post-translational modification Phosphothreonine. Positions 1056-1088 are disordered; the sequence is PKPSGAEASQAESSDLESSDLVDQTEGCQPVYV.

The protein belongs to the protein kinase superfamily. AGC Ser/Thr protein kinase family. As to quaternary structure, interacts with and is phosphorylated by AURKA. Binds to AR. Interacts with AJUBA during mitosis and this complex regulates organization of the spindle apparatus through recruitment of gamma-tubulin to the centrosome. Interacts (via PPxY motif) with YAP1 (via WW domains). Interacts with MOB1A and MOB1B. Interacts with LIMD1, WTIP and AJUBA. Interacts with SNAI1. Interacts with WWC1, WWC2 and WWC3 (via their WW domains). Interacts (via UBA domain) with ubiquitinated AMOTL2; the interaction promotes LATS2 phosphorylation of YAP1. It depends on Mg(2+) as a cofactor. Post-translationally, autophosphorylated and phosphorylated during M-phase and the G1/S-phase of the cell cycle. Phosphorylated and activated by STK3/MST2. Phosphorylated by MAP4Ks; in parallel to STK3/MST2 and resulting to its activation. Phosphorylation by NUAK2 may regulate its activity in phosphorylation and inactivation YAP1. As to expression, expressed at high levels in heart and skeletal muscle and at lower levels in all other tissues examined.

It localises to the cytoplasm. The protein localises to the cytoskeleton. The protein resides in the microtubule organizing center. Its subcellular location is the centrosome. It is found in the spindle pole. It localises to the nucleus. It catalyses the reaction L-seryl-[protein] + ATP = O-phospho-L-seryl-[protein] + ADP + H(+). It carries out the reaction L-threonyl-[protein] + ATP = O-phospho-L-threonyl-[protein] + ADP + H(+). Its function is as follows. Negative regulator of YAP1 in the Hippo signaling pathway that plays a pivotal role in organ size control and tumor suppression by restricting proliferation and promoting apoptosis. The core of this pathway is composed of a kinase cascade wherein STK3/MST2 and STK4/MST1, in complex with its regulatory protein SAV1, phosphorylates and activates LATS1/2 in complex with its regulatory protein MOB1, which in turn phosphorylates and inactivates YAP1 oncoprotein and WWTR1/TAZ. Phosphorylation of YAP1 by LATS2 inhibits its translocation into the nucleus to regulate cellular genes important for cell proliferation, cell death, and cell migration. Also phosphorylates YAP1 in response to cell contact inhibition-driven WWP1 ubiquitination of AMOTL2, which results in LATS2 activation. Acts as a tumor suppressor which plays a critical role in centrosome duplication, maintenance of mitotic fidelity and genomic stability. Negatively regulates G1/S transition by down-regulating cyclin E/CDK2 kinase activity. Negative regulator of the androgen receptor. Phosphorylates SNAI1 in the nucleus leading to its nuclear retention and stabilization, which enhances its epithelial-mesenchymal transition and tumor cell invasion/migration activities. This tumor-promoting activity is independent of its effects upon YAP1 or WWTR1/TAZ. Acts as an activator of the NLRP3 inflammasome by mediating phosphorylation of 'Ser-265' of NLRP3 following NLRP3 palmitoylation, promoting NLRP3 activation by NEK7. This chain is Serine/threonine-protein kinase LATS2, found in Homo sapiens (Human).